The following is a 262-amino-acid chain: Ribosome-recycling factor, mitochondrial (262 aa).

A mitochondrion-targeting transit peptide spans Met-1 to Phe-55.

Belongs to the RRF family.

It localises to the mitochondrion. Functionally, responsible for the disassembly of ribosomes from messenger RNA at the termination of mitochondrial protein biosynthesis. Acts in collaboration with GFM2. Promotes mitochondrial ribosome recycling by dissolution of intersubunit contacts. The protein is Ribosome-recycling factor, mitochondrial (Mrrf) of Mus musculus (Mouse).